Here is a 130-residue protein sequence, read N- to C-terminus: Glycine cleavage system H protein (130 aa).

Residues 24 to 106 (GIKVGISAFA…YQEGWLLKIT (83 aa)) form the Lipoyl-binding domain. Lysine 65 bears the N6-lipoyllysine mark.

Belongs to the GcvH family. The glycine cleavage system is composed of four proteins: P, T, L and H. The cofactor is (R)-lipoate.

In terms of biological role, the glycine cleavage system catalyzes the degradation of glycine. The H protein shuttles the methylamine group of glycine from the P protein to the T protein. The protein is Glycine cleavage system H protein of Synechococcus sp. (strain RCC307).